A 295-amino-acid chain; its full sequence is Proline-rich protein 18 (295 aa).

The span at 1 to 13 (MPFPPMPPPPAPA) shows a compositional bias: pro residues. The disordered stretch occupies residues 1-133 (MPFPPMPPPP…GAGPCPDSAA (133 aa)). Positions 14 to 29 (PGAQAARQLPRRPCAA) are enriched in low complexity. Ser-47 carries the phosphoserine modification. Omega-N-methylarginine is present on Arg-83. Over residues 103–126 (ARTTYAATSAGTGTTAAGTSSGAG) the composition is skewed to low complexity. Residue Arg-172 is modified to Asymmetric dimethylarginine. A compositionally biased stretch (low complexity) spans 181 to 192 (ARAAGPRRGGPA). The tract at residues 181–227 (ARAAGPRRGGPASDPDAPPTAGQGRRAPPPGAQLLHGGLQVPQLSPR) is disordered. Arg-188 bears the Omega-N-methylarginine mark.

The chain is Proline-rich protein 18 (PRR18) from Homo sapiens (Human).